A 226-amino-acid chain; its full sequence is Small ribosomal subunit protein uS3 (226 aa).

Positions 39 to 107 (IRKFIKNKLY…NILINITEIK (69 aa)) constitute a KH type-2 domain.

This sequence belongs to the universal ribosomal protein uS3 family. Part of the 30S ribosomal subunit. Forms a tight complex with proteins S10 and S14.

Binds the lower part of the 30S subunit head. Binds mRNA in the 70S ribosome, positioning it for translation. The polypeptide is Small ribosomal subunit protein uS3 (Acetivibrio thermocellus (strain ATCC 27405 / DSM 1237 / JCM 9322 / NBRC 103400 / NCIMB 10682 / NRRL B-4536 / VPI 7372) (Clostridium thermocellum)).